The chain runs to 374 residues: MSRVEAILSQLKDVAANPKKAMDDYKAETGKGAVGIMPIYSPEEMVHAAGYLPMGIWGAQGKTISKARTYLPAFACSVMQQVMELQCEGAYDDLSAVIFSVPCDTLKCLSQKWKGTSPVIVFTHPQNRGLEAANQFLVTEYELVKAQLESVLGVKISNAALENSIAIYNENRAVMREFVKVAADYPQVIDAVSRHAVFKARQFMLKEKHTALVKELIAEIKATPVQPWDGKKVVVTGILLEPNELLDIFNEFKIAIVDDDLAQESRQIRVDVLDGEGGPLYRMAKAWQQMYGCSLATDTKKGRGRMLINKTIQTGADAIVVAMMKFCDPEEWDYPVMYREFEEKGVKSLMIEVDQEVSSFEQIKTRLQSFVEML.

The protein belongs to the FldB/FldC dehydratase alpha/beta subunit family. As to quaternary structure, heterodimer of an alpha (LcdA) and a beta (LcdB) subunit. Requires [4Fe-4S] cluster as cofactor. The cofactor is FMN. Riboflavin is required as a cofactor. It depends on Mg(2+) as a cofactor.

It carries out the reaction (R)-lactoyl-CoA = acryloyl-CoA + H2O. The catalysed reaction is (2R)-hydroxybutanoyl-CoA = (2E)-butenoyl-CoA + H2O. Its activity is regulated as follows. Activated by the LcdC protein. In terms of biological role, involved in the acrylate pathway for the conversion of D-lactic acid to propionic acid. Catalyzes the reversible dehydration of Lactoyl-CoA and 2-hydroxybutyroyl-CoA to acryloyl-CoA and crotonyl-CoA, respectively. The polypeptide is Lactoyl-CoA dehydratase subunit beta (lcdB) (Anaerotignum propionicum (Clostridium propionicum)).